Here is a 276-residue protein sequence, read N- to C-terminus: MIVRSIWKGAISFGLVHIPIKLFAATEEKDVRFHLLHKECHNPIQYQKRCPYCDREVTPEEIVKGFEYDKGRYVIITQEELEGLAPEGSRSIDIQSFVALKEIDPIFFVKTYYLSPDQHGQKAYALLRNALRETDRLALARVILRTKEALVALRVYGKGLAMHTMLYPEEIRSMEPLGDLGESIEVSAKEQTMAVQLIESLTEPFDPVKWQSEQRERIRHFINAKVQGQAIVEAPQTPTVGKVIDLMEALKASIQQVKTQQKKEAAPKKERRRKTS.

Residues 11–177 (ISFGLVHIPI…PEEIRSMEPL (167 aa)) enclose the Ku domain. A disordered region spans residues 256–276 (QVKTQQKKEAAPKKERRRKTS).

Belongs to the prokaryotic Ku family. In terms of assembly, homodimer. Interacts with LigD.

Its function is as follows. With LigD forms a non-homologous end joining (NHEJ) DNA repair enzyme, which repairs dsDNA breaks with reduced fidelity. Binds linear dsDNA with 5'- and 3'- overhangs but not closed circular dsDNA nor ssDNA. Recruits and stimulates the ligase activity of LigD. This Heliobacterium modesticaldum (strain ATCC 51547 / Ice1) protein is Non-homologous end joining protein Ku.